The chain runs to 693 residues: UvrABC system protein B (693 aa).

The Helicase ATP-binding domain occupies Glu-35–Met-188. Residue Gly-48–Ser-55 participates in ATP binding. The short motif at Tyr-101 to Val-124 is the Beta-hairpin element. Residues Gln-438–Thr-604 enclose the Helicase C-terminal domain. A UVR domain is found at Val-648–Glu-683.

This sequence belongs to the UvrB family. Forms a heterotetramer with UvrA during the search for lesions. Interacts with UvrC in an incision complex.

It localises to the cytoplasm. Its function is as follows. The UvrABC repair system catalyzes the recognition and processing of DNA lesions. A damage recognition complex composed of 2 UvrA and 2 UvrB subunits scans DNA for abnormalities. Upon binding of the UvrA(2)B(2) complex to a putative damaged site, the DNA wraps around one UvrB monomer. DNA wrap is dependent on ATP binding by UvrB and probably causes local melting of the DNA helix, facilitating insertion of UvrB beta-hairpin between the DNA strands. Then UvrB probes one DNA strand for the presence of a lesion. If a lesion is found the UvrA subunits dissociate and the UvrB-DNA preincision complex is formed. This complex is subsequently bound by UvrC and the second UvrB is released. If no lesion is found, the DNA wraps around the other UvrB subunit that will check the other stand for damage. In Arthrobacter sp. (strain FB24), this protein is UvrABC system protein B.